Here is a 237-residue protein sequence, read N- to C-terminus: DNA repair protein RecO (237 aa).

This sequence belongs to the RecO family.

Functionally, involved in DNA repair and RecF pathway recombination. The polypeptide is DNA repair protein RecO (Rickettsia peacockii (strain Rustic)).